Reading from the N-terminus, the 1457-residue chain is Ras guanine nucleotide exchange factor C (1457 aa).

The stretch at 1–55 (MSVFTFGHGSNGALGLGKITDDTCPTPQKVNYFTEIDKRVKKVACGSYHTVFVTD) is one RCC1 1 repeat. Disordered stretches follow at residues 75–196 (FYTS…PLLN), 209–264 (HYES…RINK), 282–313 (EQQQ…DEDP), and 376–404 (QQQL…SLQT). Composition is skewed to low complexity over residues 83-121 (TTTT…KIVN) and 134-158 (SNTT…LPPT). 2 stretches are compositionally biased toward basic and acidic residues: residues 171-188 (IKLD…ELIQ) and 209-224 (HYES…KDNE). Residues 225 to 237 (NENEEDEDDDDDD) show a composition bias toward acidic residues. Over residues 238–249 (STIRQNEDKESS) the composition is skewed to basic and acidic residues. Low complexity-rich tracts occupy residues 283 to 292 (QQQQPQQPQQ) and 376 to 403 (QQQL…SSLQ). 4 RCC1 repeats span residues 351–401 (GGNV…SSSS), 432–483 (WGEL…CYTE), 485–549 (GKMY…VLTQ), and 590–647 (SGEV…ALVE). In terms of domain architecture, DH spans 650–971 (PKTKLALQLV…QVLLERMNQN (322 aa)). The span at 703–715 (LPPSLKGLSGGLP) shows a compositional bias: low complexity. Residues 703–762 (LPPSLKGLSGGLPDNANNTIKNGKDKDNHHNGDSNGHHSNGHYHGNGNNGNNSITTSNSI) are disordered. Positions 724 to 738 (NGKDKDNHHNGDSNG) are enriched in basic and acidic residues. The segment covering 739-762 (HHSNGHYHGNGNNGNNSITTSNSI) has biased composition (low complexity). The region spanning 989 to 1109 (GNPQIMGGSL…SVSQIKLQYF (121 aa)) is the N-terminal Ras-GEF domain. Residues 1127–1210 (LTQNEITTPP…NNNNNNNNLT (84 aa)) are disordered. Residues 1138–1211 (LQIQNNNQNN…NNNNNNNLTN (74 aa)) are a coiled coil. Low complexity predominate over residues 1142 to 1210 (NNNQNNNLEN…NNNNNNNNLT (69 aa)). Residues 1232-1454 (QPIEVAQTLT…DDKQAQKISS (223 aa)) form the Ras-GEF domain.

In terms of biological role, promotes the exchange of Ras-bound GDP by GTP. The polypeptide is Ras guanine nucleotide exchange factor C (gefC) (Dictyostelium discoideum (Social amoeba)).